The sequence spans 100 residues: Urease subunit gamma (100 aa).

Belongs to the urease gamma subunit family. In terms of assembly, heterotrimer of UreA (gamma), UreB (beta) and UreC (alpha) subunits. Three heterotrimers associate to form the active enzyme.

It is found in the cytoplasm. The enzyme catalyses urea + 2 H2O + H(+) = hydrogencarbonate + 2 NH4(+). The protein operates within nitrogen metabolism; urea degradation; CO(2) and NH(3) from urea (urease route): step 1/1. This is Urease subunit gamma from Prochlorococcus marinus (strain NATL1A).